The following is a 221-amino-acid chain: MKCLFLLCLCLVPIVVFSSTFTSKNPINLPSDATPVLDVAGKELDSRLSYRIISTFWGALGGDVYLGKSPNSDAPCANGIFRYNSDVGPSGTPVRFIGSSSHFGQGIFENELLNIQFAISTSKLCVSYTIWKVGDYDASLGTMLLETGGTIGQADSSWFKIVKSSQFGYNLLYCPVTSTMSCPFSSDDQFCLKVGVVHQNGKRRLALVKDNPLDVSFKQVQ.

The N-terminal stretch at 1–22 (MKCLFLLCLCLVPIVVFSSTFT) is a signal peptide. Residues 23–28 (SKNPIN) constitute a propeptide that is removed on maturation. Positions 25 to 30 (NPINLP) match the Vacuolar targeting signal motif. Cystine bridges form between Cys76-Cys125 and Cys174-Cys191.

Belongs to the protease inhibitor I3 (leguminous Kunitz-type inhibitor) family. In terms of tissue distribution, tubers. Not detected in root, stem, leaves or flower bud.

It is found in the vacuole. Inhibitor of trypsin (serine protease). May protect the plant by inhibiting proteases of invading organisms. This is Serine protease inhibitor 7 from Solanum tuberosum (Potato).